The primary structure comprises 509 residues: Lysophospholipid acyltransferase (509 aa).

Residues 1–14 lie on the Lumenal side of the membrane; sequence MAYLIDIPFEYFSS. A helical transmembrane segment spans residues 15 to 35; the sequence is FLGVHPDQLKLLFCFLSAYPF. The Cytoplasmic segment spans residues 36-55; that stretch reads AGILKRLPSAPWIRNLFSIS. A helical transmembrane segment spans residues 56 to 76; sequence IGLFYLIGVHHLYDGVLVLLF. Residues 77–94 lie on the Lumenal side of the membrane; it reads DALFTYFVAAFYRSSRMP. The helical transmembrane segment at 95–115 threads the bilayer; sequence WIIFIVILGHTFSSHVIRYIY. Residues 116–223 are Cytoplasmic-facing; sequence PSENTDITAS…LEPALGRCWR (108 aa). Residues 224–244 form a helical membrane-spanning segment; the sequence is GLLWLILFITGSSIYPLKFLL. Residues 245–246 are Lumenal-facing; sequence TP. Residues 247–267 traverse the membrane as a helical segment; sequence KFASSPILLKYGYVCITAFVA. Residues 268 to 410 are Cytoplasmic-facing; the sequence is RMKYYGAWEL…TPGPFKRVYD (143 aa). Residue histidine 363 is part of the active site. The chain crosses the membrane as a helical span at residues 411–431; that stretch reads VIGMVATNLSLSYLIISFLLL. Topologically, residues 432-441 are lumenal; sequence NLKESIHVWK. A helical membrane pass occupies residues 442–462; the sequence is ELYFIVHIYILIALAVFNSPI. At 463–509 the chain is on the cytoplasmic side; sequence RSKLDNKIRSRVNSYKLKSYEQSMKSTSDTDMLNMSVPKREDFENDE. Positions 488–509 are disordered; that stretch reads STSDTDMLNMSVPKREDFENDE. At serine 490 the chain carries Phosphoserine. Over residues 500 to 509 the composition is skewed to basic and acidic residues; sequence PKREDFENDE.

The protein belongs to the membrane-bound acyltransferase family.

Its subcellular location is the endoplasmic reticulum membrane. The protein localises to the microsome membrane. The catalysed reaction is a 1-acyl-sn-glycero-3-phosphate + an acyl-CoA = a 1,2-diacyl-sn-glycero-3-phosphate + CoA. It catalyses the reaction a 1-acyl-sn-glycero-3-phosphocholine + an acyl-CoA = a 1,2-diacyl-sn-glycero-3-phosphocholine + CoA. The enzyme catalyses a 1-acyl-sn-glycero-3-phosphoethanolamine + an acyl-CoA = a 1,2-diacyl-sn-glycero-3-phosphoethanolamine + CoA. Its function is as follows. Membrane-bound O-acyltransferase that mediates the incorporation of unsaturated acyl chains into the sn-2 position of phospholipids. This Schizosaccharomyces pombe (strain 972 / ATCC 24843) (Fission yeast) protein is Lysophospholipid acyltransferase (ale1).